A 147-amino-acid chain; its full sequence is Hemoglobin subunit beta (147 aa).

An N-acetylvaline modification is found at Val2. Positions His3 to His147 constitute a Globin domain. Ser45 is modified (phosphoserine). An N6-acetyllysine modification is found at Lys60. Heme b is bound at residue His64. An N6-acetyllysine modification is found at Lys83. Position 93 (His93) interacts with heme b. Cys94 bears the S-nitrosocysteine mark.

This sequence belongs to the globin family. Heterotetramer of two alpha chains and two beta chains. Red blood cells.

Its function is as follows. Involved in oxygen transport from the lung to the various peripheral tissues. The chain is Hemoglobin subunit beta (HBB) from Camelus dromedarius (Dromedary).